The sequence spans 905 residues: MLRDPTTTGWPPLLLLLLQLPPPPLVCGAPAGPGTGAQASELVVPTRLPGSASELAFHLSAFGQGFVLRLAPDASFLAPEFKIERLGGSSAAAGGEPGLRGCFFSGTVNGERESLAAMSCVAGWSGSFLLAGEEFTIQPQGAGDSLDQPHRLQRWGPGQRREDPGLAAAEVFPLPQGLEWEVEMGNGQGQERSDNEEDRKQDKEGLLKETEDSRKVPPPFGSKTRSKRFVSEARFVETLLVADASMAAFYGTDLQNHILTVMSMAARIYKHPSIRNSVNLVVVKVLIVEKERWGPEVSDNGGLTLRNFCSWQRRFNKPSDRHPEHYDTAILFTRQNFCGKGEQCDTLGMADVGTICDPDKSCSVIKDEGLQAAYTLAHELGHVLSMPHDDSKPCVRLFGPMGKYHMMAPFFIHVNKTLPWSPCSAVYLTELLDDGHGDCLLDAPTSVLPLPTGLPGHSTLYELDQQCKQIFGPDFRHCPNTSVEDICVQLCARHRDSDEPICHTKNGSLLWADGTPCGPGHLCLDGSCVLKEDVENPKAVVDGDWGPWRPWGQCSRTCGGGIQFSNRECDNPMPQNGGRFCLGERVKYQSCNTEECPPNGKSFREQQCEKYNAYNHTDLDGNFLQWVPKYSGVSPRDRCKLFCRARGRSEFKVFEAKVIDGTLCGPDTLSICVRGQCVKAGCDHVVNSPKKLDKCGVCGGKGTACRKISGSFTPFSYGYNDIVTIPAGATNIDVKQRSHPGVRNDGSYLALKTANGQYLLNGNLAISAIEQDILVKGTILKYSGSMATLERLQSFQALPEPLTVQLLTVSGEVFPPKVRYTFFVPNDMDFSVQNSKERATTNIIQSLPSAEWVLGDWSECPSTCRGSWQRRTVECRDPSGQASDTCDEALKPEDAKPCGSQPCPL.

Residues 1–28 form the signal peptide; it reads MLRDPTTTGWPPLLLLLLQLPPPPLVCG. A propeptide spanning residues 29 to 228 is cleaved from the precursor; it reads APAGPGTGAQ…PFGSKTRSKR (200 aa). 2 disordered regions span residues 139–163 and 186–225; these read PQGAGDSLDQPHRLQRWGPGQRRED and NGQGQERSDNEEDRKQDKEGLLKETEDSRKVPPPFGSKTR. Residues 191–215 show a composition bias toward basic and acidic residues; the sequence is ERSDNEEDRKQDKEGLLKETEDSRK. A Peptidase M12B domain is found at 234–444; it reads RFVETLLVAD…GHGDCLLDAP (211 aa). 10 disulfides stabilise this stretch: Cys309/Cys362, Cys338/Cys344, Cys356/Cys439, Cys394/Cys423, Cys478/Cys502, Cys487/Cys523, Cys517/Cys528, Cys554/Cys591, Cys558/Cys596, and Cys569/Cys581. Position 378 (His378) interacts with Zn(2+). Glu379 is a catalytic residue. Zn(2+) contacts are provided by His382 and His388. Residues Asn415, Asn480, and Asn506 are each glycosylated (N-linked (GlcNAc...) asparagine). The 89-residue stretch at 453-541 folds into the Disintegrin domain; it reads GLPGHSTLYE…EDVENPKAVV (89 aa). In terms of domain architecture, TSP type-1 1 spans 542–597; that stretch reads DGDWGPWRPWGQCSRTCGGGIQFSNRECDNPMPQNGGRFCLGERVKYQSCNTEECP. N-linked (GlcNAc...) asparagine glycosylation occurs at Asn615. Positions 706–847 are spacer; the sequence is RKISGSFTPF…RATTNIIQSL (142 aa). A TSP type-1 2 domain is found at 848–904; it reads PSAEWVLGDWSECPSTCRGSWQRRTVECRDPSGQASDTCDEALKPEDAKPCGSQPCP. The segment at 877-905 is disordered; that stretch reads DPSGQASDTCDEALKPEDAKPCGSQPCPL.

Zn(2+) serves as cofactor. The precursor is cleaved by a furin endopeptidase. Post-translationally, glycosylated. Can be O-fucosylated by POFUT2 on a serine or a threonine residue found within the consensus sequence C1-X(2)-(S/T)-C2-G of the TSP type-1 repeat domains where C1 and C2 are the first and second cysteine residue of the repeat, respectively. Fucosylated repeats can then be further glycosylated by the addition of a beta-1,3-glucose residue by the glucosyltransferase, B3GALTL. Fucosylation mediates the efficient secretion of ADAMTS family members. Can also be C-glycosylated with one or two mannose molecules on tryptophan residues within the consensus sequence W-X-X-W of the TPRs, and N-glycosylated. These other glycosylations can also facilitate secretion. In terms of tissue distribution, expressed specifically in adult lung and heart and low expression during mouse development.

The protein resides in the secreted. It localises to the extracellular space. Its subcellular location is the extracellular matrix. Has anti-angiogenic properties. In Mus musculus (Mouse), this protein is A disintegrin and metalloproteinase with thrombospondin motifs 8 (Adamts8).